Consider the following 169-residue polypeptide: Myelin basic protein (169 aa).

Ala-1 is subject to N-acetylalanine. Residues 1-114 form a disordered region; sequence AAQKRPSQRS…GRGLSLSRFS (114 aa). Position 7 is a phosphoserine; in C5 and C6 (Ser-7). Ser-10 carries the post-translational modification Phosphoserine. Tyr-12 bears the Phosphotyrosine mark. The residue at position 17 (Ser-17) is a Phosphoserine. Position 18 is a phosphothreonine (Thr-18). Citrulline; in form C8b is present on Arg-23. At Arg-29 the chain carries Citrulline. The residue at position 33 (Thr-33) is a Phosphothreonine. Ser-38 is subject to Phosphoserine. At Arg-41 the chain carries Citrulline; alternate. An Omega-N-methylarginine; alternate modification is found at Arg-41. The interval 43-87 is induces experimental autoimmune encephalomyelitis (EAE) 1; the sequence is FGSDRGAPKRGSGKDGHHAARTTHYGSLPQKAQGHRPQDENPVVH. Arg-47 is subject to Citrulline; in form C8b. Omega-N-methylarginine is present on Arg-47. Ser-54 carries the post-translational modification Phosphoserine; in C4, C5 and C6. At Arg-63 the chain carries Citrulline. Phosphothreonine is present on Thr-65. The residue at position 67 (Tyr-67) is a Phosphotyrosine. Position 94 is a phosphothreonine (Thr-94). At Arg-96 the chain carries Citrulline; in form C2, C3, C8a and C8b. Thr-97 bears the Phosphothreonine; by MAPK; in C3, C4, C5 and C6 mark. Deamidated glutamine; in form C5 is present on Gln-102. Arg-106 carries the post-translational modification Citrulline; alternate. Arg-106 bears the Omega-N-methylarginine; alternate mark. Symmetric dimethylarginine; alternate is present on Arg-106. A Citrulline modification is found at Arg-112. Ser-114 carries the phosphoserine modification. Positions 114–122 are induces experimental autoimmune encephalomyelitis (EAE) 2; it reads SWGAEGQKP. A Deamidated glutamine; in form C3 modification is found at Gln-120. An N6-acetyllysine modification is found at Lys-121. At Arg-129 the chain carries Citrulline. Residues 133–169 form a disordered region; sequence YKSAHKGLKGHDAQGTLSKIFKLGGRDSRSGSPMARR. Deamidated glutamine; in form C2 is present on Gln-146. Arg-158 is subject to Citrulline. The residue at position 160 (Ser-160) is a Phosphoserine; in C4 and C6. A Citrulline; in form C3 modification is found at Arg-161. At Ser-164 the chain carries Phosphoserine; in form C3, C5 and C6. 2 positions are modified to citrulline: Arg-168 and Arg-169.

It belongs to the myelin basic protein family. In terms of assembly, homodimer; self-associates in the presence of lysolipid. At least 6 charge isomers; C1 (the most cationic and least modified form), C2, C3, C4, C5 and C6 (the least cationic form); are produced as a result of optional post-translational modifications, such as phosphorylation of serine or threonine residues, deamidation of glutamine or asparagine residues, citrullination and methylation of arginine residues. In terms of processing, phosphorylated by TAOK2, VRK2, MAPK11, MAPK12, MAPK14 and MINK1. Post-translationally, proteolytically cleaved in B cell lysosomes by cathepsin CTSG which degrades the major immunogenic MBP epitope and prevents the activation of MBP-specific autoreactive T cells. As to expression, found in both the central and the peripheral nervous system.

The protein localises to the myelin membrane. Its function is as follows. Is, with PLP, the most abundant protein component of the myelin membrane in the CNS. Has a role in both the formation and stabilization of this compact multilayer arrangement of bilayers. Each splice variant and charge isomer may have a specialized function in the assembly of an optimized, biochemically functional myelin membrane. The chain is Myelin basic protein (MBP) from Bos taurus (Bovine).